Here is a 131-residue protein sequence, read N- to C-terminus: Cytochrome c-552 (131 aa).

4 residues coordinate heme c: cysteine 11, cysteine 14, histidine 15, and methionine 69.

Binds 1 heme c group covalently per subunit.

Its function is as follows. This monoheme basic protein appears to function as an electron donor to cytochrome oxidase in T.thermophilus. This chain is Cytochrome c-552 (cycA), found in Thermus thermophilus.